Consider the following 200-residue polypeptide: Transcription elongation factor A protein-like 3 (200 aa).

Over residues 1–19 (MEEVRGENEGKLEKEGKPE) the composition is skewed to basic and acidic residues. The disordered stretch occupies residues 1-200 (MEEVRGENEG…QRGLHDIPYL (200 aa)). The span at 20–34 (DEVEPEDEEKSDEDE) shows a compositional bias: acidic residues. Phosphoserine is present on S30. Basic and acidic residues-rich tracts occupy residues 47 to 85 (GKPEEEAKPDEQGQDEGKPEKQGKSDGEGKRQGESKPDS), 94 to 106 (RAAEKRPAEDYVP), and 114 to 153 (DRGTDDSPKNSQEDLQDRHVSSEEMMRECADMTRAQEELR).

It belongs to the TFS-II family. TFA subfamily.

The protein resides in the nucleus. May be involved in transcriptional regulation. This is Transcription elongation factor A protein-like 3 (Tceal3) from Mus musculus (Mouse).